A 216-amino-acid polypeptide reads, in one-letter code: Ribosome maturation factor RimP (216 aa).

This sequence belongs to the RimP family.

It localises to the cytoplasm. Functionally, required for maturation of 30S ribosomal subunits. This Bartonella quintana (strain Toulouse) (Rochalimaea quintana) protein is Ribosome maturation factor RimP.